The following is a 754-amino-acid chain: Polyadenylate-binding protein, cytoplasmic and nuclear (754 aa).

A compositionally biased stretch (polar residues) spans methionine 1–alanine 25. Residues methionine 1 to serine 52 form a disordered region. Over residues serine 36–asparagine 46 the composition is skewed to low complexity. RRM domains lie at alanine 51 to arginine 129, glycine 139 to serine 216, threonine 232 to lysine 309, and valine 335 to arginine 465. Disordered regions lie at residues lysine 365 to aspartate 420 and arginine 595 to proline 648. Positions valine 366–aspartate 420 are enriched in basic and acidic residues. Over residues glycine 610–glycine 633 the composition is skewed to gly residues. Low complexity predominate over residues glutamine 634–proline 648. Residues alanine 649–lysine 726 enclose the PABC domain. Residues glycine 729 to serine 754 are disordered.

It belongs to the polyadenylate-binding protein type-1 family.

It is found in the cytoplasm. It localises to the nucleus. Functionally, binds the poly(A) tail of mRNA. Appears to be an important mediator of the multiple roles of the poly(A) tail in mRNA biogenesis, stability and translation. In the nucleus, involved in both mRNA cleavage and polyadenylation. Is also required for efficient mRNA export to the cytoplasm. Acts in concert with a poly(A)-specific nuclease (PAN) to affect poly(A) tail shortening, which may occur concomitantly with either nucleocytoplasmic mRNA transport or translational initiation. In the cytoplasm, stimulates translation initiation and regulates mRNA decay through translation termination-coupled poly(A) shortening, probably mediated by PAN. The protein is Polyadenylate-binding protein, cytoplasmic and nuclear (pab1) of Aspergillus clavatus (strain ATCC 1007 / CBS 513.65 / DSM 816 / NCTC 3887 / NRRL 1 / QM 1276 / 107).